A 479-amino-acid chain; its full sequence is Flap endonuclease 1 (479 aa).

The interval 1–106 is N-domain; that stretch reads MGIKGLTKFI…SELEKRGEKR (106 aa). D34 is a binding site for Mg(2+). 2 residues coordinate DNA: R47 and R72. Mg(2+)-binding residues include D88, E160, E162, D181, and D183. The segment at 124 to 266 is I-domain; that stretch reads EIKKQSGRTV…KTAYNLIKEY (143 aa). E160 provides a ligand contact to DNA. DNA contacts are provided by G244 and D246. D246 contacts Mg(2+). The interval 349–357 is interaction with PCNA; sequence TQRRLDTFF. The disordered stretch occupies residues 379-455; that stretch reads AKGKGKKREL…NSDSGNIKNE (77 aa). The segment covering 403–428 has biased composition (basic and acidic residues); that stretch reads NIKDEKKNTDKMDELKNKSDENFVKD.

The protein belongs to the XPG/RAD2 endonuclease family. FEN1 subfamily. In terms of assembly, interacts with PCNA. Three molecules of FEN1 bind to one PCNA trimer with each molecule binding to one PCNA monomer. PCNA stimulates the nuclease activity without altering cleavage specificity. The cofactor is Mg(2+). In terms of processing, phosphorylated. Phosphorylation upon DNA damage induces relocalization to the nuclear plasma.

Its subcellular location is the nucleus. The protein localises to the nucleolus. It localises to the nucleoplasm. The protein resides in the mitochondrion. In terms of biological role, structure-specific nuclease with 5'-flap endonuclease and 5'-3' exonuclease activities involved in DNA replication and repair. During DNA replication, cleaves the 5'-overhanging flap structure that is generated by displacement synthesis when DNA polymerase encounters the 5'-end of a downstream Okazaki fragment. It enters the flap from the 5'-end and then tracks to cleave the flap base, leaving a nick for ligation. Also involved in the long patch base excision repair (LP-BER) pathway, by cleaving within the apurinic/apyrimidinic (AP) site-terminated flap. Acts as a genome stabilization factor that prevents flaps from equilibrating into structures that lead to duplications and deletions. Also possesses 5'-3' exonuclease activity on nicked or gapped double-stranded DNA, and exhibits RNase H activity. Also involved in replication and repair of rDNA and in repairing mitochondrial DNA. This is Flap endonuclease 1 from Plasmodium chabaudi chabaudi.